A 372-amino-acid chain; its full sequence is Queuine tRNA-ribosyltransferase (372 aa).

Catalysis depends on aspartate 92, which acts as the Proton acceptor. Substrate contacts are provided by residues 92 to 96 (DSGGF), aspartate 146, glutamine 188, and glycine 215. Residues 246–252 (GIGTLRE) are RNA binding. Aspartate 265 (nucleophile) is an active-site residue. The RNA binding; important for wobble base 34 recognition stretch occupies residues 270-274 (TRLGR). The Zn(2+) site is built by cysteine 303, cysteine 305, cysteine 308, and histidine 334.

It belongs to the queuine tRNA-ribosyltransferase family. As to quaternary structure, homodimer. Within each dimer, one monomer is responsible for RNA recognition and catalysis, while the other monomer binds to the replacement base PreQ1. Requires Zn(2+) as cofactor.

It catalyses the reaction 7-aminomethyl-7-carbaguanine + guanosine(34) in tRNA = 7-aminomethyl-7-carbaguanosine(34) in tRNA + guanine. It participates in tRNA modification; tRNA-queuosine biosynthesis. Its function is as follows. Catalyzes the base-exchange of a guanine (G) residue with the queuine precursor 7-aminomethyl-7-deazaguanine (PreQ1) at position 34 (anticodon wobble position) in tRNAs with GU(N) anticodons (tRNA-Asp, -Asn, -His and -Tyr). Catalysis occurs through a double-displacement mechanism. The nucleophile active site attacks the C1' of nucleotide 34 to detach the guanine base from the RNA, forming a covalent enzyme-RNA intermediate. The proton acceptor active site deprotonates the incoming PreQ1, allowing a nucleophilic attack on the C1' of the ribose to form the product. After dissociation, two additional enzymatic reactions on the tRNA convert PreQ1 to queuine (Q), resulting in the hypermodified nucleoside queuosine (7-(((4,5-cis-dihydroxy-2-cyclopenten-1-yl)amino)methyl)-7-deazaguanosine). In Synechococcus sp. (strain CC9605), this protein is Queuine tRNA-ribosyltransferase.